The primary structure comprises 393 residues: S-adenosylmethionine synthase 1 (393 aa).

Residue E9 coordinates Mg(2+). ATP is bound at residue H15. E43 serves as a coordination point for K(+). 2 residues coordinate L-methionine: E56 and Q99. ATP-binding positions include 167–169, 235–238, D246, 252–253, A269, K273, and K277; these read DGK, SGRF, and RK. An L-methionine-binding site is contributed by D246. K277 contacts L-methionine.

The protein belongs to the AdoMet synthase family. As to quaternary structure, homotetramer. Requires Mn(2+) as cofactor. It depends on Mg(2+) as a cofactor. The cofactor is Co(2+). K(+) is required as a cofactor.

The protein resides in the cytoplasm. It carries out the reaction L-methionine + ATP + H2O = S-adenosyl-L-methionine + phosphate + diphosphate. Its pathway is amino-acid biosynthesis; S-adenosyl-L-methionine biosynthesis; S-adenosyl-L-methionine from L-methionine: step 1/1. Catalyzes the formation of S-adenosylmethionine from methionine and ATP. The reaction comprises two steps that are both catalyzed by the same enzyme: formation of S-adenosylmethionine (AdoMet) and triphosphate, and subsequent hydrolysis of the triphosphate. The chain is S-adenosylmethionine synthase 1 (SAMS1) from Brassica juncea (Indian mustard).